A 614-amino-acid polypeptide reads, in one-letter code: V-type proton ATPase catalytic subunit A (614 aa).

247–254 (GAFGCGKT) serves as a coordination point for ATP.

This sequence belongs to the ATPase alpha/beta chains family. V-ATPase is a heteromultimeric enzyme made up of two complexes: the ATP-hydrolytic V1 complex and the proton translocation V0 complex. The V1 complex consists of three catalytic AB heterodimers that form a heterohexamer, three peripheral stalks each consisting of EG heterodimers, one central rotor including subunits D and F, and the regulatory subunits C and H. The proton translocation complex V0 consists of the proton transport subunit a, a ring of proteolipid subunits c9c'', rotary subunit d, subunits e and f, and the accessory subunits VhaAC45 and ATP6AP2.

The catalysed reaction is ATP + H2O + 4 H(+)(in) = ADP + phosphate + 5 H(+)(out). With respect to regulation, ATP hydrolysis occurs at the interface between the nucleotide-binding domains of subunits A and B. ATP hydrolysis triggers a conformational change in the subunits D and F, which induces a shift of subunit d. The c-ring is subsequently rotated and results in a continuous proton translocation across the membrane. Catalytic subunit of the V1 complex of vacuolar(H+)-ATPase (V-ATPase), a multisubunit enzyme composed of a peripheral complex (V1) that hydrolyzes ATP and a membrane integral complex (V0) that translocates protons. V-ATPase is responsible for acidifying and maintaining the pH of intracellular compartments and in some cell types, is targeted to the plasma membrane, where it is responsible for acidifying the extracellular environment. This Anopheles gambiae (African malaria mosquito) protein is V-type proton ATPase catalytic subunit A.